A 456-amino-acid polypeptide reads, in one-letter code: Histidine--tRNA ligase (456 aa).

Belongs to the class-II aminoacyl-tRNA synthetase family. As to quaternary structure, homodimer.

Its subcellular location is the cytoplasm. It catalyses the reaction tRNA(His) + L-histidine + ATP = L-histidyl-tRNA(His) + AMP + diphosphate + H(+). This Borreliella burgdorferi (strain ATCC 35210 / DSM 4680 / CIP 102532 / B31) (Borrelia burgdorferi) protein is Histidine--tRNA ligase (hisS).